An 805-amino-acid chain; its full sequence is Ribosome biogenesis protein ERB1 (805 aa).

The disordered stretch occupies residues 1–105 (MVKGRKSQKA…SDFSEDDTKS (105 aa)). The segment covering 8-22 (QKADKVTKAKKRVAD) has biased composition (basic and acidic residues). Residues 23–75 (EVDESESEPELQVEGLIDAEAESEDDESFESAEENASAEEDEEDEEDEEDSDA) show a composition bias toward acidic residues. The required for interaction with NOP7 stretch occupies residues 264–382 (RFVPSKNEAK…LRKVPGYTES (119 aa)). Positions 382–418 (SVRERFERSLDLYLAPRMRKNKLNIDPESLIPELPSP) are required for interaction with YTM1. 7 WD repeats span residues 434–473 (GHEGKIRTLSIDPTGIWLATGSDDGSVRIWEILTGREVYR), 482–522 (NPED…YDIE), 590–632 (VCKK…TQSP), 635–673 (KSKGIIMDAKFHPFKPQLFVCSQRYVRIYDLSQQVLVKK), 676–715 (PGARWLSNIDIHPRGDNLIASSYDKRVLWHDLDLAATPYK), 719–758 (YHDKAVRSTTFHKKLPLFCSAADDGFIHIFHATVYDDMMK), and 775–805 (GHLGVLDTIWHPKEAWLFSAGADNTARMWTT).

Belongs to the WD repeat BOP1/ERB1 family. Component of the NOP7 complex, composed of ERB1, NOP7 and YTM1. The complex is held together by ERB1, which interacts with NOP7 via its N-terminal domain and with YTM1 via a high-affinity interaction between the seven-bladed beta-propeller domains of the 2 proteins. The NOP7 complex associates with the 66S pre-ribosome.

It is found in the nucleus. The protein resides in the nucleolus. Its subcellular location is the nucleoplasm. In terms of biological role, component of the NOP7 complex, which is required for maturation of the 25S and 5.8S ribosomal RNAs and formation of the 60S ribosome. This chain is Ribosome biogenesis protein ERB1, found in Candida glabrata (strain ATCC 2001 / BCRC 20586 / JCM 3761 / NBRC 0622 / NRRL Y-65 / CBS 138) (Yeast).